Reading from the N-terminus, the 346-residue chain is MEKLARQQIQALTPYLSARRIGGSGDVWLNANESPFNNEYKTDFARLNRYSDCQPKAMIQAYANYAGVQPEQVLTSRGADEGIELLIRAFCEPNQDVILFCPPTYGMYAISAETFGVERKKVPLTTDWQLDLPSIEANLDRVKLVFVCSPNNPTGNLVKRADIIKLLEMTQDRAIVVMDEAYIDFCPEASTVDLLAQYPNLAILRTLSKAFALAGLRCGFTLANAELINVLLKVIAPYPVPVPVAEIAVQALSPAGLARAKYQVLDLGANRAYLQVGLSMVPGVQVFEGWGNYLLVKFPDGDALFKAAWEHGIILRNSPIENCVRISVGNREECEKTVAFIRNYYQ.

Residue Lys-209 is modified to N6-(pyridoxal phosphate)lysine.

This sequence belongs to the class-II pyridoxal-phosphate-dependent aminotransferase family. Histidinol-phosphate aminotransferase subfamily. In terms of assembly, homodimer. It depends on pyridoxal 5'-phosphate as a cofactor.

The catalysed reaction is L-histidinol phosphate + 2-oxoglutarate = 3-(imidazol-4-yl)-2-oxopropyl phosphate + L-glutamate. It functions in the pathway amino-acid biosynthesis; L-histidine biosynthesis; L-histidine from 5-phospho-alpha-D-ribose 1-diphosphate: step 7/9. This Vibrio cholerae serotype O1 (strain ATCC 39315 / El Tor Inaba N16961) protein is Histidinol-phosphate aminotransferase.